The primary structure comprises 2039 residues: PHD finger protein 3 (2039 aa).

Phosphoserine occurs at positions 97 and 125. Residues 144–168 (STIAKRSNAAPLSNTKKASGKTVST) show a composition bias toward polar residues. The tract at residues 144 to 178 (STIAKRSNAAPLSNTKKASGKTVSTAKAGVKQPER) is disordered. 2 positions are modified to phosphoserine: Ser283 and Ser299. The span at 460-472 (ESHETANLQDDRN) shows a compositional bias: basic and acidic residues. Disordered stretches follow at residues 460-492 (ESHETANLQDDRNSQSSSVSYLESKSVKSKHTK), 528-555 (VKRNTDVPESQQNFHRPVKVRKKQIDKE), and 596-685 (LSDK…SLDE). The segment covering 473–483 (SQSSSVSYLES) has biased composition (low complexity). A compositionally biased stretch (basic and acidic residues) spans 596-612 (LSDKSHAHPGCLKEPHH). A compositionally biased stretch (polar residues) spans 617–640 (GHVSHSSQKQCHKPQQQAPAMKTN). Residues 642 to 670 (HVKEELEHPGVEHFKEEDKLKLKKPEKNL) are compositionally biased toward basic and acidic residues. Lys644 is covalently cross-linked (Glycyl lysine isopeptide (Lys-Gly) (interchain with G-Cter in SUMO2)). The residue at position 680 (Ser680) is a Phosphoserine. The PHD-type zinc-finger motif lies at 717 to 772 (SKQCGFCKKPHGNRFMVGCGRCDDWFHGDCVGLSLSQAQQMGEEDKEYVCVKCCAE). A disordered region spans residues 860–904 (GQPVLPRRSSEEKSEKIPKESTTVTCTGEKASKPGTHEKQEMKKK). 2 stretches are compositionally biased toward basic and acidic residues: residues 867-878 (RSSEEKSEKIPK) and 889-900 (KASKPGTHEKQE). Residues 927-1046 (IRQSVRHSLK…MIEKEQREVE (120 aa)) form the TFIIS central domain. Lys964 is covalently cross-linked (Glycyl lysine isopeptide (Lys-Gly) (interchain with G-Cter in SUMO2)). Phosphoserine is present on Ser1014. The interval 1078 to 1109 (EPAANKSLEKPEGSEKQKEEVDSMSKDTTSQH) is disordered. Residues 1084–1102 (SLEKPEGSEKQKEEVDSMS) show a composition bias toward basic and acidic residues. A phosphoserine mark is found at Ser1133, Ser1148, and Ser1178. Disordered stretches follow at residues 1171 to 1191 (FEEEKQESPKSTFSPAPRPEM), 1360 to 1380 (STSHIAETPESAPPIALPPDK), and 1581 to 1623 (KQEE…VGKG). Over residues 1581–1598 (KQEETVESKEKTLKRQLQ) the composition is skewed to basic and acidic residues. Phosphoserine is present on residues Ser1614 and Ser1642. Disordered stretches follow at residues 1643–1684 (PQFI…LPGL) and 1776–1800 (PSKSITFTSRSTSPRTSTNFSPMRP). Residues 1666–1684 (ESKDGDSCRNGEKHMLPGL) show a composition bias toward basic and acidic residues. Residues 1781–1797 (TFTSRSTSPRTSTNFSP) are compositionally biased toward low complexity. An asymmetric dimethylarginine mark is found at Arg1867 and Arg1877. A disordered region spans residues 1884 to 2039 (FYQVKDIRRP…DHTDRTKSKR (156 aa)). 2 stretches are compositionally biased toward basic and acidic residues: residues 1888-1902 (KDIRRPERRHSDPWG) and 1912-2039 (PFNR…KSKR). Phosphoserine occurs at positions 1898 and 1925. Residue Lys1931 forms a Glycyl lysine isopeptide (Lys-Gly) (interchain with G-Cter in SUMO2) linkage.

As to expression, ubiquitous. Expression is significantly reduced or lost in glioblastomas, glioblastoma cell lines, anaplastic astrocytomas, and astrocytomas.

The polypeptide is PHD finger protein 3 (PHF3) (Homo sapiens (Human)).